A 74-amino-acid chain; its full sequence is Acyclotide phyb-K (74 aa).

Positions 1–24 are cleaved as a signal peptide; the sequence is MARVNSLKCALCFIVLILFVQLNC. Positions 25-43 are excised as a propeptide; it reads IPETRVMAVELSRVFLQTS. 3 cysteine pairs are disulfide-bonded: Cys-47–Cys-64, Cys-51–Cys-66, and Cys-56–Cys-71.

In terms of processing, contains 3 disulfide bonds. As to expression, expressed in midvein, lamina and periphery of leaves (at protein level).

Functionally, probably participates in a plant defense mechanism. The chain is Acyclotide phyb-K from Petunia hybrida (Petunia).